Here is a 139-residue protein sequence, read N- to C-terminus: Metallothiol transferase FosB (139 aa).

Residues 4–119 (GINHITYSVS…DGHKLELHTG (116 aa)) form the VOC domain. Mg(2+) contacts are provided by histidine 7, histidine 66, and glutamate 115. Glutamate 115 (proton donor/acceptor) is an active-site residue.

This sequence belongs to the fosfomycin resistance protein family. FosB subfamily. In terms of assembly, homodimer. Mg(2+) serves as cofactor.

It is found in the cytoplasm. Its function is as follows. Metallothiol transferase which confers resistance to fosfomycin by catalyzing the addition of a thiol cofactor to fosfomycin. L-cysteine is probably the physiological thiol donor. The sequence is that of Metallothiol transferase FosB from Staphylococcus haemolyticus.